Reading from the N-terminus, the 249-residue chain is Imidazole glycerol phosphate synthase subunit HisF (249 aa).

Active-site residues include Asp-11 and Asp-130.

This sequence belongs to the HisA/HisF family. Heterodimer of HisH and HisF.

The protein localises to the cytoplasm. The enzyme catalyses 5-[(5-phospho-1-deoxy-D-ribulos-1-ylimino)methylamino]-1-(5-phospho-beta-D-ribosyl)imidazole-4-carboxamide + L-glutamine = D-erythro-1-(imidazol-4-yl)glycerol 3-phosphate + 5-amino-1-(5-phospho-beta-D-ribosyl)imidazole-4-carboxamide + L-glutamate + H(+). It participates in amino-acid biosynthesis; L-histidine biosynthesis; L-histidine from 5-phospho-alpha-D-ribose 1-diphosphate: step 5/9. IGPS catalyzes the conversion of PRFAR and glutamine to IGP, AICAR and glutamate. The HisF subunit catalyzes the cyclization activity that produces IGP and AICAR from PRFAR using the ammonia provided by the HisH subunit. The protein is Imidazole glycerol phosphate synthase subunit HisF of Sulfolobus acidocaldarius (strain ATCC 33909 / DSM 639 / JCM 8929 / NBRC 15157 / NCIMB 11770).